The primary structure comprises 124 residues: MATINQLVRKGRKRRVAKSNVPALEASPQKRGVCTRVYTTTPKKPNSALRKVARVRLTNNYEVSSYIGGEGHNLQEHSVVLIRGGRVKDLPGVRYHVVRGAADTAGVDKRRQGRSKYGAKRPKS.

The disordered stretch occupies residues 1 to 29; the sequence is MATINQLVRKGRKRRVAKSNVPALEASPQ. Aspartate 89 is subject to 3-methylthioaspartic acid. A disordered region spans residues 101–124; it reads AADTAGVDKRRQGRSKYGAKRPKS. Positions 111 to 124 are enriched in basic residues; it reads RQGRSKYGAKRPKS.

It belongs to the universal ribosomal protein uS12 family. As to quaternary structure, part of the 30S ribosomal subunit. Contacts proteins S8 and S17. May interact with IF1 in the 30S initiation complex.

In terms of biological role, with S4 and S5 plays an important role in translational accuracy. Interacts with and stabilizes bases of the 16S rRNA that are involved in tRNA selection in the A site and with the mRNA backbone. Located at the interface of the 30S and 50S subunits, it traverses the body of the 30S subunit contacting proteins on the other side and probably holding the rRNA structure together. The combined cluster of proteins S8, S12 and S17 appears to hold together the shoulder and platform of the 30S subunit. This is Small ribosomal subunit protein uS12 from Alkalilimnicola ehrlichii (strain ATCC BAA-1101 / DSM 17681 / MLHE-1).